A 504-amino-acid chain; its full sequence is Probable cytosol aminopeptidase (504 aa).

Mn(2+) contacts are provided by K274 and D279. Residue K286 is part of the active site. The Mn(2+) site is built by D297, D356, and E358. R360 is an active-site residue.

Belongs to the peptidase M17 family. Requires Mn(2+) as cofactor.

The protein localises to the cytoplasm. The enzyme catalyses Release of an N-terminal amino acid, Xaa-|-Yaa-, in which Xaa is preferably Leu, but may be other amino acids including Pro although not Arg or Lys, and Yaa may be Pro. Amino acid amides and methyl esters are also readily hydrolyzed, but rates on arylamides are exceedingly low.. It catalyses the reaction Release of an N-terminal amino acid, preferentially leucine, but not glutamic or aspartic acids.. Presumably involved in the processing and regular turnover of intracellular proteins. Catalyzes the removal of unsubstituted N-terminal amino acids from various peptides. The protein is Probable cytosol aminopeptidase of Blochmanniella floridana.